A 238-amino-acid chain; its full sequence is Probable 2-phosphosulfolactate phosphatase (238 aa).

The protein belongs to the ComB family. It depends on Mg(2+) as a cofactor.

The catalysed reaction is (2R)-O-phospho-3-sulfolactate + H2O = (2R)-3-sulfolactate + phosphate. In Clostridium beijerinckii (strain ATCC 51743 / NCIMB 8052) (Clostridium acetobutylicum), this protein is Probable 2-phosphosulfolactate phosphatase.